Consider the following 178-residue polypeptide: Large ribosomal subunit protein uL6 (178 aa).

The protein belongs to the universal ribosomal protein uL6 family. In terms of assembly, part of the 50S ribosomal subunit.

Functionally, this protein binds to the 23S rRNA, and is important in its secondary structure. It is located near the subunit interface in the base of the L7/L12 stalk, and near the tRNA binding site of the peptidyltransferase center. This Leifsonia xyli subsp. xyli (strain CTCB07) protein is Large ribosomal subunit protein uL6.